Reading from the N-terminus, the 945-residue chain is Xylanolytic transcriptional activator xlnR (945 aa).

2 disordered regions span residues 1-33 and 53-74; these read MSTP…TVGL and AAGT…MSHA. The segment covering 14–24 has biased composition (low complexity); it reads SPFSSGSQSTG. The zn(2)-C6 fungal-type DNA-binding region spans 125-151; that stretch reads CDQCNQLRTKCDGQHPCAHCIEFGLTC. Disordered stretches follow at residues 172–251 and 559–601; these read AAAA…PSLG and PPNV…INVT. Composition is skewed to polar residues over residues 177 to 188 and 218 to 251; these read HGSNGHSGQANA and ISSQ…PSLG. Over residues 565 to 581 the composition is skewed to basic and acidic residues; the sequence is ARQDGERDGDGEADRRH.

It belongs to the xlnR/xlr1 family.

Its subcellular location is the nucleus. Its function is as follows. Transcriptional activator of the xylanolytic system. Involved in the regulation of extracellular cellulolytic and xylanolytic genes and in the regulation of the intracellular activities of D-xylose catabolic genes in the pentose catabolic pathway (PCP) in response to the presence of D-xylose. This chain is Xylanolytic transcriptional activator xlnR (xlnR), found in Aspergillus kawachii (White koji mold).